Consider the following 377-residue polypeptide: UPF0754 membrane protein RBAM_010020 (377 aa).

Helical transmembrane passes span 1-21 (MGIA…GAVT) and 357-377 (YLGG…VILF).

It belongs to the UPF0754 family.

It localises to the cell membrane. This Bacillus velezensis (strain DSM 23117 / BGSC 10A6 / LMG 26770 / FZB42) (Bacillus amyloliquefaciens subsp. plantarum) protein is UPF0754 membrane protein RBAM_010020.